The primary structure comprises 372 residues: Cytochrome b (372 aa).

The next 4 helical transmembrane spans lie at 25 to 45, 69 to 90, 105 to 125, and 170 to 190; these read FGSM…FLAI, WIMQ…YIHI, WFSG…GYVL, and FFAL…IHII. 2 residues coordinate heme b: H75 and H89. Heme b is bound by residues H174 and H188. H193 is a binding site for a ubiquinone. Helical transmembrane passes span 218–238, 280–300, 312–332, and 339–358; these read YKDM…LSFM, LGGT…PFTH, LAQT…WTAT, and FILI…IMNP.

This sequence belongs to the cytochrome b family. In terms of assembly, the cytochrome bc1 complex contains 3 respiratory subunits (MT-CYB, CYC1 and UQCRFS1), 2 core proteins (UQCRC1 and UQCRC2) and probably 6 low-molecular weight proteins. Heme b is required as a cofactor.

Its subcellular location is the mitochondrion inner membrane. Functionally, component of the ubiquinol-cytochrome c reductase complex (complex III or cytochrome b-c1 complex) that is part of the mitochondrial respiratory chain. The b-c1 complex mediates electron transfer from ubiquinol to cytochrome c. Contributes to the generation of a proton gradient across the mitochondrial membrane that is then used for ATP synthesis. The sequence is that of Cytochrome b (MT-CYB) from Sinomicrurus japonicus (Coral snake).